Consider the following 558-residue polypeptide: Type I restriction enzyme MjaIX methylase subunit (558 aa).

The disordered stretch occupies residues 1-37 (MATLDKFLSIKENDEKTKKKESKKKSSKSNKTSESLV). A compositionally biased stretch (basic and acidic residues) spans 8–18 (LSIKENDEKTK). Basic residues predominate over residues 19–28 (KKESKKKSSK). Residues 227 to 232 (KFYTPR), 256 to 258 (SGG), and Asp283 contribute to the S-adenosyl-L-methionine site.

Belongs to the N(4)/N(6)-methyltransferase family. The type I restriction/modification system is composed of three polypeptides R, M and S.

The enzyme catalyses a 2'-deoxyadenosine in DNA + S-adenosyl-L-methionine = an N(6)-methyl-2'-deoxyadenosine in DNA + S-adenosyl-L-homocysteine + H(+). Functionally, the subtype gamma methyltransferase (M) subunit of a type I restriction enzyme. The M and S subunits together form a methyltransferase (MTase) that methylates A-3 on the top and A-2 on the bottom strand of the sequence 5'-CCAN(5)GTR-3'. In the presence of the R subunit the complex can also act as an endonuclease, binding to the same target sequence but cutting the DNA some distance from this site. Whether the DNA is cut or modified depends on the methylation state of the target sequence. When the target site is unmodified, the DNA is cut. When the target site is hemimethylated, the complex acts as a maintenance MTase modifying the DNA so that both strands become methylated. After locating a non-methylated recognition site, the enzyme complex serves as a molecular motor that translocates DNA in an ATP-dependent manner until a collision occurs that triggers cleavage. This is Type I restriction enzyme MjaIX methylase subunit from Methanocaldococcus jannaschii (strain ATCC 43067 / DSM 2661 / JAL-1 / JCM 10045 / NBRC 100440) (Methanococcus jannaschii).